Here is a 438-residue protein sequence, read N- to C-terminus: ATP-dependent RNA helicase SUB2 (438 aa).

Over residues 1–19 (MSHEGEEDLLEYSDNEQEI) the composition is skewed to acidic residues. The disordered stretch occupies residues 1 to 44 (MSHEGEEDLLEYSDNEQEIQVDNTKATEVAGNGEEAADGKDGDK). Positions 54-82 (TGFKDFLLKPELSRAIIDCGFEHPSEVQQ) match the Q motif motif. Residues 85–260 (IPQSIHGTDV…RRFLQNPLEI (176 aa)) enclose the Helicase ATP-binding domain. 98–105 (AKSGLGKT) serves as a coordination point for ATP. The DECD box signature appears at 207 to 210 (DECD). In terms of domain architecture, Helicase C-terminal spans 272–433 (GLQQYYIRLE…EFPEEGVDPS (162 aa)).

Belongs to the DEAD box helicase family. DECD subfamily.

It is found in the nucleus. The catalysed reaction is ATP + H2O = ADP + phosphate + H(+). Its function is as follows. ATP-binding RNA helicase involved in transcription elongation and required for the export of mRNA out of the nucleus. SUB2 also plays a role in pre-mRNA splicing and spliceosome assembly. May be involved in rDNA and telomeric silencing, and maintenance of genome integrity. This chain is ATP-dependent RNA helicase SUB2 (SUB2), found in Eremothecium gossypii (strain ATCC 10895 / CBS 109.51 / FGSC 9923 / NRRL Y-1056) (Yeast).